A 388-amino-acid polypeptide reads, in one-letter code: Type II secretion system protein F (388 aa).

The disordered stretch occupies residues 1-28 (MTEGDSARQVRQQLREQGLTPLEVNETT). Residues 1 to 153 (MTEGDSARQV…HMRTKLLQAM (153 aa)) lie on the Cytoplasmic side of the membrane. Positions 79, 133, and 137 each coordinate Ca(2+). Residues 154–174 (IYPIVLTLVAVGVISILLTAV) traverse the membrane as a helical segment. Over 175–205 (VPKVVAQFEHMGQQLPATTRFLIGTSELMQH) the chain is Periplasmic. The chain crosses the membrane as a helical span at residues 206–226 (YGLWFLLLLFIGGFVWRWWLT). Residues 227-350 (DEKRRRHWHQ…QDREFETQVN (124 aa)) are Cytoplasmic-facing. Residues 351–371 (IALGVFEPLLVVSMAGVVLFI) traverse the membrane as a helical segment. The Periplasmic portion of the chain corresponds to 372 to 388 (VMSILQPILELNNMVNL).

This sequence belongs to the GSP F family. In terms of assembly, type II secretion system is composed of four main components: the outer membrane complex, the inner membrane complex, the cytoplasmic secretion ATPase and the periplasm-spanning pseudopilus. Homodimer. Interacts with ExeE and ExeL components.

The protein localises to the cell inner membrane. In terms of biological role, component of the type II secretion system inner membrane complex required for the energy-dependent secretion of extracellular factors such as proteases and toxins from the periplasm. The polypeptide is Type II secretion system protein F (exeF) (Aeromonas hydrophila).